A 218-amino-acid chain; its full sequence is Ribosomal RNA small subunit methyltransferase G (218 aa).

Residues Gly82, Leu87, 133-134, and Arg147 each bind S-adenosyl-L-methionine; that span reads VE.

This sequence belongs to the methyltransferase superfamily. RNA methyltransferase RsmG family.

The protein resides in the cytoplasm. The enzyme catalyses guanosine(527) in 16S rRNA + S-adenosyl-L-methionine = N(7)-methylguanosine(527) in 16S rRNA + S-adenosyl-L-homocysteine. Its function is as follows. Specifically methylates the N7 position of guanine in position 527 of 16S rRNA. This chain is Ribosomal RNA small subunit methyltransferase G, found in Leptothrix cholodnii (strain ATCC 51168 / LMG 8142 / SP-6) (Leptothrix discophora (strain SP-6)).